The following is a 446-amino-acid chain: Cyclin-F2-2 (446 aa).

The segment at 191-216 (YNGDNDAPAPDNSTASRPQLCAPYDD) is disordered.

This sequence belongs to the cyclin family. Cyclin F subfamily.

The sequence is that of Cyclin-F2-2 (CYCF2-2) from Oryza sativa subsp. japonica (Rice).